Here is a 194-residue protein sequence, read N- to C-terminus: Orotate phosphoribosyltransferase (194 aa).

Residue 117–125 (EDVVTTGLS) coordinates 5-phospho-alpha-D-ribose 1-diphosphate. Orotate contacts are provided by threonine 121 and arginine 149.

It belongs to the purine/pyrimidine phosphoribosyltransferase family. PyrE subfamily. As to quaternary structure, homodimer. Requires Mg(2+) as cofactor.

The catalysed reaction is orotidine 5'-phosphate + diphosphate = orotate + 5-phospho-alpha-D-ribose 1-diphosphate. Its pathway is pyrimidine metabolism; UMP biosynthesis via de novo pathway; UMP from orotate: step 1/2. Functionally, catalyzes the transfer of a ribosyl phosphate group from 5-phosphoribose 1-diphosphate to orotate, leading to the formation of orotidine monophosphate (OMP). This Novosphingobium aromaticivorans (strain ATCC 700278 / DSM 12444 / CCUG 56034 / CIP 105152 / NBRC 16084 / F199) protein is Orotate phosphoribosyltransferase.